The primary structure comprises 510 residues: NAD(P)H-quinone oxidoreductase subunit 2 B, chloroplastic (510 aa).

13 consecutive transmembrane segments (helical) span residues 24–44, 57–77, 99–119, 124–144, 149–169, 183–203, 227–247, 295–315, 323–343, 354–374, 395–415, 418–438, and 484–504; these read LLLF…GLIL, IPWL…ALLF, IFQF…VEYI, MAIA…MFLC, LITI…LSGY, YLLM…WLYG, PGIS…LSPA, WHLL…LIAI, MLAY…IVGN, YMLF…LFGL, ALSL…AGFF, LHLF…IGLL, and MIVC…IIAI.

This sequence belongs to the complex I subunit 2 family. In terms of assembly, NDH is composed of at least 16 different subunits, 5 of which are encoded in the nucleus.

The protein localises to the plastid. It is found in the chloroplast thylakoid membrane. The enzyme catalyses a plastoquinone + NADH + (n+1) H(+)(in) = a plastoquinol + NAD(+) + n H(+)(out). It catalyses the reaction a plastoquinone + NADPH + (n+1) H(+)(in) = a plastoquinol + NADP(+) + n H(+)(out). NDH shuttles electrons from NAD(P)H:plastoquinone, via FMN and iron-sulfur (Fe-S) centers, to quinones in the photosynthetic chain and possibly in a chloroplast respiratory chain. The immediate electron acceptor for the enzyme in this species is believed to be plastoquinone. Couples the redox reaction to proton translocation, and thus conserves the redox energy in a proton gradient. The chain is NAD(P)H-quinone oxidoreductase subunit 2 B, chloroplastic from Gossypium barbadense (Sea Island cotton).